The chain runs to 181 residues: Ion-translocating oxidoreductase complex subunit B (181 aa).

The interval 1-26 (MLEAVSAVMSLGGMALFAGLGLGYAA) is hydrophobic. The region spanning 32 to 90 (EADPVVEKLEALLPATNCGMCGHPGCGPYAQAITEGEAINLCTPGGKAVMESIAAMLGV) is the 4Fe-4S domain. The [4Fe-4S] cluster site is built by C49, C52, C57, C73, C110, C113, C116, C120, C140, C143, C146, and C150. 2 4Fe-4S ferredoxin-type domains span residues 101–130 (KVAY…GANK) and 131–160 (QSHT…MQPV).

This sequence belongs to the 4Fe4S bacterial-type ferredoxin family. RnfB subfamily. The complex is composed of six subunits: RnfA, RnfB, RnfC, RnfD, RnfE and RnfG. It depends on [4Fe-4S] cluster as a cofactor.

It is found in the cell inner membrane. In terms of biological role, part of a membrane-bound complex that couples electron transfer with translocation of ions across the membrane. The polypeptide is Ion-translocating oxidoreductase complex subunit B (Magnetococcus marinus (strain ATCC BAA-1437 / JCM 17883 / MC-1)).